Here is a 394-residue protein sequence, read N- to C-terminus: GDP-mannose transporter (394 aa).

Over 1–55 (MADKKNEDFVVRMPDNGTVEKEPFLARSPPARARTGSGGGFGDSFSLARVANNPP) the chain is Cytoplasmic. The helical transmembrane segment at 56–76 (AAILAYCLSSISMTVVNKYVV) threads the bilayer. Residues 77–80 (SGSE) are Lumenal-facing. The chain crosses the membrane as a helical span at residues 81 to 101 (WNLNFFYLAVQAIVCIIAILF). Topologically, residues 102–121 (CKQIGIITNLAPFDNVKAKK) are cytoplasmic. A helical transmembrane segment spans residues 122-144 (WFPVSLLLVGMIYTSTKALQFLS). The Lumenal segment spans residues 145–149 (VPVYT). The helical transmembrane segment at 150-167 (IFKNLTIIAIAYGEVLWF) threads the bilayer. Residues 168–173 (GGSVSP) are Cytoplasmic-facing. A helical membrane pass occupies residues 174-198 (LALVSFGLMVLSSVVAAWADIQSAI). Topologically, residues 199–213 (HGGSHPSEASTAIST) are lumenal. The helical transmembrane segment at 214-234 (LNAGYAWMGMNVFCSAAYLLG) threads the bilayer. Residues 235–246 (MRKVIHKMNFKD) are Cytoplasmic-facing. A helical membrane pass occupies residues 247–267 (WDSMFYNNLLTIPVLIVCSLI). Over 268-287 (AEDWSAANLARNFPIESRNA) the chain is Lumenal. The chain crosses the membrane as a helical span at residues 288–308 (LFIGMIYSGLGAIFISYCSAW). Residues 309–316 (CIRVTTST) lie on the Cytoplasmic side of the membrane. The helical transmembrane segment at 317–339 (TYSMVGALNKLPIAISGLVFFSA) threads the bilayer. The Lumenal segment spans residues 340–342 (PVT). A helical transmembrane segment spans residues 343-362 (FGSVSAIVIGFISGIVYAWA). The Cytoplasmic portion of the chain corresponds to 363-394 (KARQSSQAKSALPTQQPVMSASSQSNKDASNS). Positions 371–394 (KSALPTQQPVMSASSQSNKDASNS) are disordered. Residues 374–394 (LPTQQPVMSASSQSNKDASNS) show a composition bias toward polar residues.

Belongs to the TPT transporter family. SLC35D subfamily. As to quaternary structure, homooligomer.

Its subcellular location is the golgi apparatus membrane. It localises to the cytoplasmic vesicle membrane. The protein localises to the endoplasmic reticulum membrane. Involved in the import of GDP-mannose from the cytoplasm into the Golgi lumen. The sequence is that of GDP-mannose transporter (VRG4) from Pyricularia oryzae (strain 70-15 / ATCC MYA-4617 / FGSC 8958) (Rice blast fungus).